The primary structure comprises 679 residues: Probable metal-nicotianamine transporter YSL18 (679 aa).

Residues 1–17 (MESVGDPRDGPSTERAF) are compositionally biased toward basic and acidic residues. Residues 1-21 (MESVGDPRDGPSTERAFEGQP) form a disordered region. The next 14 helical transmembrane spans lie at 29 to 49 (VTLR…SVMM), 51 to 71 (LVFT…LGFF), 101 to 121 (CVVA…LLAM), 144 to 164 (FGRM…AIVP), 211 to 231 (LASL…NCGF), 255 to 275 (VGIG…GSII), 309 to 329 (VFCA…AISL), 379 to 399 (FAIS…PLMY), 407 to 427 (VAAA…GTGV), 441 to 461 (ILMF…SLVI), 497 to 517 (VIGT…FHHF), 547 to 567 (LPKY…AVCA), 593 to 613 (FLLV…VFLW), and 627 to 647 (VLAS…ALLA).

It belongs to the YSL (TC 2.A.67.2) family.

It is found in the membrane. Functionally, may be involved in the transport of nicotianamine-chelated metals. This chain is Probable metal-nicotianamine transporter YSL18 (YSL18), found in Oryza sativa subsp. japonica (Rice).